Here is a 515-residue protein sequence, read N- to C-terminus: C-glycoside 3-oxidase (515 aa).

An FAD-binding site is contributed by Glu-41. Positions 62 to 82 (ERAHAQRRSEGPHAREDDDRV) are enriched in basic and acidic residues. The interval 62-90 (ERAHAQRRSEGPHAREDDDRVGGIVKSAQ) is disordered. FAD is bound by residues Ser-118, Asn-120, Met-124, Thr-129, Ala-131, and Val-237. Catalysis depends on His-444, which acts as the Proton acceptor. FAD contacts are provided by Asn-478 and Thr-490.

Belongs to the GMC oxidoreductase family. Monomer. The cofactor is FAD.

It carries out the reaction isoorientin + O2 = 3''-dehydroisoorientin + H2O2. It catalyses the reaction mangiferin + O2 = 3'-dehydromangiferin + H2O2. FAD-dependent C-glycoside-metabolizing enzyme that participates in the degradation of certain C-glycosides by catalyzing the oxidation of the hydroxyl group at the C3 position of the sugar moiety. Shows oxidase activity toward C-glycosides such as isoorientin and mangiferin but cannot use carminic acid, puerarin, orientin or aloesin. Shows weak activity (100 to 1000-fold lower) with O-glycosides. Probably plays a crucial role in the metabolism of C-glycosides in nature. The sequence is that of C-glycoside 3-oxidase from Microbacterium trichothecenolyticum (Aureobacterium trichothecenolyticum).